Here is a 210-residue protein sequence, read N- to C-terminus: Interleukin-6 (210 aa).

An N-terminal signal peptide occupies residues 1-25 (MNSLSTSAFSPVAFSLGLLLVMATA). C72 and C78 are joined by a disulfide. S81 is modified (phosphoserine). A disulfide bridge links C101 with C111.

This sequence belongs to the IL-6 superfamily. As to quaternary structure, component of a hexamer of two molecules each of IL6, IL6R and IL6ST; first binds to IL6R to associate with the signaling subunit IL6ST. Interacts with IL6R (via the N-terminal ectodomain); this interaction may be affected by IL6R-binding with SORL1, hence decreasing IL6 cis signaling. Interacts with SORL1 (via the N-terminal ectodomain); this interaction leads to IL6 internalization and lysosomal degradation. May form a trimeric complex with the soluble SORL1 ectodomain and soluble IL6R receptor; this interaction might stabilize circulating IL6, hence promoting IL6 trans signaling.

The protein resides in the secreted. In terms of biological role, cytokine with a wide variety of biological functions in immunity, tissue regeneration, and metabolism. Binds to IL6R, then the complex associates to the signaling subunit IL6ST/gp130 to trigger the intracellular IL6-signaling pathway. The interaction with the membrane-bound IL6R and IL6ST stimulates 'classic signaling', whereas the binding of IL6 and soluble IL6R to IL6ST stimulates 'trans-signaling'. Alternatively, 'cluster signaling' occurs when membrane-bound IL6:IL6R complexes on transmitter cells activate IL6ST receptors on neighboring receiver cells. IL6 is a potent inducer of the acute phase response. Rapid production of IL6 contributes to host defense during infection and tissue injury, but excessive IL6 synthesis is involved in disease pathology. In the innate immune response, is synthesized by myeloid cells, such as macrophages and dendritic cells, upon recognition of pathogens through toll-like receptors (TLRs) at the site of infection or tissue injury. In the adaptive immune response, is required for the differentiation of B cells into immunoglobulin-secreting cells. Plays a major role in the differentiation of CD4(+) T cell subsets. Essential factor for the development of T follicular helper (Tfh) cells that are required for the induction of germinal-center formation. Required to drive naive CD4(+) T cells to the Th17 lineage. Also required for proliferation of myeloma cells and the survival of plasmablast cells. Its function is as follows. Acts as an essential factor in bone homeostasis and on vessels directly or indirectly by induction of VEGF, resulting in increased angiogenesis activity and vascular permeability. Induces, through 'trans-signaling' and synergistically with IL1B and TNF, the production of VEGF. Involved in metabolic controls, is discharged into the bloodstream after muscle contraction increasing lipolysis and improving insulin resistance. 'Trans-signaling' in central nervous system also regulates energy and glucose homeostasis. Mediates, through GLP-1, crosstalk between insulin-sensitive tissues, intestinal L cells and pancreatic islets to adapt to changes in insulin demand. Also acts as a myokine. Plays a protective role during liver injury, being required for maintenance of tissue regeneration. Also has a pivotal role in iron metabolism by regulating HAMP/hepcidin expression upon inflammation or bacterial infection. Through activation of IL6ST-YAP-NOTCH pathway, induces inflammation-induced epithelial regeneration. This is Interleukin-6 (IL6) from Mustela putorius furo (European domestic ferret).